Reading from the N-terminus, the 75-residue chain is SPbeta prophage-derived uncharacterized protein YorX (75 aa).

The sequence is that of SPbeta prophage-derived uncharacterized protein YorX (yorX) from Bacillus subtilis (strain 168).